Consider the following 70-residue polypeptide: Large ribosomal subunit protein uL29 (70 aa).

This sequence belongs to the universal ribosomal protein uL29 family.

This is Large ribosomal subunit protein uL29 from Clostridium botulinum (strain Alaska E43 / Type E3).